The following is a 140-amino-acid chain: Large ribosomal subunit protein uL16 (140 aa).

The disordered stretch occupies residues 1–24; it reads MALAPARTKYRKSQKGSRAGNAKR.

This sequence belongs to the universal ribosomal protein uL16 family. In terms of assembly, part of the 50S ribosomal subunit.

Binds 23S rRNA and is also seen to make contacts with the A and possibly P site tRNAs. The protein is Large ribosomal subunit protein uL16 of Opitutus terrae (strain DSM 11246 / JCM 15787 / PB90-1).